The following is a 431-amino-acid chain: Glutamate-1-semialdehyde 2,1-aminomutase (431 aa).

Lys-269 carries the post-translational modification N6-(pyridoxal phosphate)lysine.

Belongs to the class-III pyridoxal-phosphate-dependent aminotransferase family. HemL subfamily. Homodimer. It depends on pyridoxal 5'-phosphate as a cofactor.

The protein resides in the cytoplasm. The catalysed reaction is (S)-4-amino-5-oxopentanoate = 5-aminolevulinate. The protein operates within porphyrin-containing compound metabolism; protoporphyrin-IX biosynthesis; 5-aminolevulinate from L-glutamyl-tRNA(Glu): step 2/2. It participates in porphyrin-containing compound metabolism; chlorophyll biosynthesis. The sequence is that of Glutamate-1-semialdehyde 2,1-aminomutase from Pelodictyon phaeoclathratiforme (strain DSM 5477 / BU-1).